Consider the following 292-residue polypeptide: Acetylglutamate kinase (292 aa).

Substrate-binding positions include 64–65 (GG), arginine 86, and asparagine 190.

This sequence belongs to the acetylglutamate kinase family. ArgB subfamily.

The protein resides in the cytoplasm. It carries out the reaction N-acetyl-L-glutamate + ATP = N-acetyl-L-glutamyl 5-phosphate + ADP. It participates in amino-acid biosynthesis; L-arginine biosynthesis; N(2)-acetyl-L-ornithine from L-glutamate: step 2/4. Catalyzes the ATP-dependent phosphorylation of N-acetyl-L-glutamate. The sequence is that of Acetylglutamate kinase from Geobacter sulfurreducens (strain ATCC 51573 / DSM 12127 / PCA).